The following is a 447-amino-acid chain: Serine/threonine-protein phosphatase 2A 55 kDa regulatory subunit B gamma isoform (447 aa).

WD repeat units lie at residues 22–61, 87–128, 171–209, 220–260, 279–317, 334–375, and 410–446; these read TPADIISTVEFNHTGELLATGDKGGRVVIFQREPESKNAP, EIEE…KRPE, GHTYHINSISVNSDCETYMSADDLRINLWHLAITDRSFN, DLTE…LCDK, EIISSVSDVKFSHSGRYMLTRDYLTVKVWDLNMEARPIE, ENDC…DVTL, and DFTKKILHTAWHPAENIIAIAATNNLYIFQDKVNSDM.

This sequence belongs to the phosphatase 2A regulatory subunit B family. As to quaternary structure, PP2A consists of a common heterodimeric core enzyme, composed of a 36 kDa catalytic subunit (subunit C) and a 65 kDa constant regulatory subunit (PR65 or subunit A), that associates with a variety of regulatory subunits. Proteins that associate with the core dimer include three families of regulatory subunits B (the R2/B/PR55/B55, R3/B''/PR72/PR130/PR59 and R5/B'/B56 families), the 48 kDa variable regulatory subunit, viral proteins, and cell signaling molecules. Interacts with IER5.

Its function is as follows. The B regulatory subunit might modulate substrate selectivity and catalytic activity, and might also direct the localization of the catalytic enzyme to a particular subcellular compartment. The polypeptide is Serine/threonine-protein phosphatase 2A 55 kDa regulatory subunit B gamma isoform (PPP2R2C) (Macaca fascicularis (Crab-eating macaque)).